Here is a 415-residue protein sequence, read N- to C-terminus: Serine hydroxymethyltransferase (415 aa).

(6S)-5,6,7,8-tetrahydrofolate contacts are provided by residues Leu-121 and 125-127 (GHL). The residue at position 230 (Lys-230) is an N6-(pyridoxal phosphate)lysine. Residues Glu-246 and 354–356 (SPF) contribute to the (6S)-5,6,7,8-tetrahydrofolate site.

The protein belongs to the SHMT family. In terms of assembly, homodimer. Pyridoxal 5'-phosphate is required as a cofactor.

It localises to the cytoplasm. The enzyme catalyses (6R)-5,10-methylene-5,6,7,8-tetrahydrofolate + glycine + H2O = (6S)-5,6,7,8-tetrahydrofolate + L-serine. It functions in the pathway one-carbon metabolism; tetrahydrofolate interconversion. Its pathway is amino-acid biosynthesis; glycine biosynthesis; glycine from L-serine: step 1/1. Catalyzes the reversible interconversion of serine and glycine with tetrahydrofolate (THF) serving as the one-carbon carrier. This reaction serves as the major source of one-carbon groups required for the biosynthesis of purines, thymidylate, methionine, and other important biomolecules. Also exhibits THF-independent aldolase activity toward beta-hydroxyamino acids, producing glycine and aldehydes, via a retro-aldol mechanism. The chain is Serine hydroxymethyltransferase from Bdellovibrio bacteriovorus (strain ATCC 15356 / DSM 50701 / NCIMB 9529 / HD100).